A 334-amino-acid polypeptide reads, in one-letter code: Cyclin N-terminal domain-containing protein 1 (334 aa).

The region spanning 29-180 (NALLHLAQQN…ILKSLNFQIN (152 aa)) is the Cyclin N-terminal domain.

Interacts with PRR19; this interaction promotes crossover formation. Interacts with RFC3 and RFC4; these interactions facilitate crossover formation. Interacts with CDC34; this interaction regulates the cell-cycle progression. In terms of tissue distribution, isoform 2 is expressed in spermatocyte.

The protein localises to the nucleus. It is found in the cytoplasm. It localises to the chromosome. In terms of biological role, plays a role in the different steps of crossover formation during meiotic recombination. Participates in the crossover differentiation step of crossover-specific recombination intermediates through its interaction with PRR19. In addition, stimulates crossover formation through the interactions with RFC3 and RFC4 and simultaneously regulates cell-cycle progression through interactions with CDC34 and subsequent ubiquitination of WEE1. May also participates in an active deselection process that destabilizes or removes excess pre-CO intermediates. In Mus musculus (Mouse), this protein is Cyclin N-terminal domain-containing protein 1.